We begin with the raw amino-acid sequence, 327 residues long: L-lactate dehydrogenase (327 aa).

Residues Val18, Asp39, Lys44, Tyr69, and 83–84 contribute to the NAD(+) site; that span reads GA. Residues Gln86, Arg92, and 124–127 each bind substrate; that span reads NPVD. NAD(+) is bound by residues 122-124 and Ser147; that span reads AAN. Substrate is bound at residue 152-155; it reads DSAR. Arg157 and His172 together coordinate beta-D-fructose 1,6-bisphosphate. Catalysis depends on His179, which acts as the Proton acceptor. Tyr224 bears the Phosphotyrosine mark. Residue Thr233 participates in substrate binding.

Belongs to the LDH/MDH superfamily. LDH family. Homotetramer.

Its subcellular location is the cytoplasm. It carries out the reaction (S)-lactate + NAD(+) = pyruvate + NADH + H(+). It functions in the pathway fermentation; pyruvate fermentation to lactate; (S)-lactate from pyruvate: step 1/1. Its activity is regulated as follows. Allosterically activated by fructose 1,6-bisphosphate (FBP). Functionally, catalyzes the conversion of lactate to pyruvate. The protein is L-lactate dehydrogenase of Streptococcus equi subsp. zooepidemicus (strain H70).